We begin with the raw amino-acid sequence, 134 residues long: uncharacterized protein (134 aa).

Residues 1–26 (MRLYKAMALCLPLVVICTSEVSQSTA) form the signal peptide. Positions 77-98 (GEKNEEVAGPVDGEGSEEEAFD) are disordered.

This is an uncharacterized protein from Encephalitozoon cuniculi (strain GB-M1) (Microsporidian parasite).